A 64-amino-acid polypeptide reads, in one-letter code: Large ribosomal subunit protein bL35 (64 aa).

Belongs to the bacterial ribosomal protein bL35 family.

The polypeptide is Large ribosomal subunit protein bL35 (Vibrio parahaemolyticus serotype O3:K6 (strain RIMD 2210633)).